Reading from the N-terminus, the 249-residue chain is Adenylate kinase (249 aa).

Gly-43–Thr-48 is a binding site for ATP. An NMP region spans residues Ala-63–Val-92. AMP contacts are provided by residues Thr-64, Arg-69, Gly-90 to Val-92, Gly-119 to Arg-122, and Gln-126. The interval Gly-160 to Asp-197 is LID. ATP contacts are provided by residues Arg-161 and Ser-170–Tyr-171. Positions Pro-177–Asp-197 are disordered. Arg-194 and Arg-205 together coordinate AMP. Gln-233 provides a ligand contact to ATP.

Belongs to the adenylate kinase family. AK2 subfamily. As to quaternary structure, monomer.

It localises to the cytoplasm. It is found in the cytosol. Its subcellular location is the mitochondrion intermembrane space. The catalysed reaction is AMP + ATP = 2 ADP. Functionally, catalyzes the reversible transfer of the terminal phosphate group between ATP and AMP. Plays an important role in cellular energy homeostasis and in adenine nucleotide metabolism. Adenylate kinase activity is critical for regulation of the phosphate utilization and the AMP de novo biosynthesis pathways. The chain is Adenylate kinase from Candida albicans (strain SC5314 / ATCC MYA-2876) (Yeast).